The sequence spans 254 residues: Methyl-CpG-binding domain-containing protein 11 (254 aa).

One can recognise an MBD domain in the interval 4 to 74; the sequence is EEEVVSVELP…AEFDWTTSGT (71 aa). The interval 56 to 254 is disordered; it reads KSHPGNPAIA…EKTAEGEATG (199 aa). Basic and acidic residues-rich tracts occupy residues 80 to 97, 107 to 130, 151 to 162, and 178 to 254; these read RISE…EPPK, SKKD…KDTE, ETERVNDAKENI, and ESMK…EATG. Serine 116 is subject to Phosphoserine.

Expressed in leaves (around hydathodes), buds, flowers (carpels and pollen grains), stems (around nodes), siliques, mature seeds and roots.

The protein localises to the nucleus. Its function is as follows. Transcriptional regulator that binds DNA independently of its methylation status. Required during plant organogenesis and development. This is Methyl-CpG-binding domain-containing protein 11 (MBD11) from Arabidopsis thaliana (Mouse-ear cress).